We begin with the raw amino-acid sequence, 566 residues long: Beta-1,2-xylosyltransferease XAX1 (566 aa).

Residues 1 to 25 are disordered; it reads MTSTAYSRPSKLPGGGNGSDRRLPP. Topologically, residues 1–43 are cytoplasmic; sequence MTSTAYSRPSKLPGGGNGSDRRLPPRLMRGLTTKIEPKKLGVG. A helical; Signal-anchor for type II membrane protein transmembrane segment spans residues 44–64; the sequence is LLAGCCLALLTYVSLAKLFAI. The Lumenal segment spans residues 65–566; sequence YSPVFASTAN…LLQALDRLQQ (502 aa). N-linked (GlcNAc...) asparagine glycosylation occurs at Asn-74. A disordered region spans residues 78 to 180; sequence LMQNSPPSSP…AAGGDTKIKC (103 aa). Over residues 84–94 the composition is skewed to pro residues; that stretch reads PSSPETGPIPP. Asn-104, Asn-368, Asn-429, Asn-515, and Asn-549 each carry an N-linked (GlcNAc...) asparagine glycan.

It belongs to the glycosyltransferase 61 family. As to expression, highly expressed in young panicles.

It is found in the golgi apparatus membrane. It participates in glycan metabolism. Its function is as follows. Glycosyltransferase involved in the xylosylation of xylan, the major hemicellulose (non-cellulosic component) of primary and secondary walls of angiosperms. Possesses beta-1,2-xylosyltransferase activity, transferring xylose from UDP-xylose to the xylan backbone. This is Beta-1,2-xylosyltransferease XAX1 from Oryza sativa subsp. japonica (Rice).